Here is a 647-residue protein sequence, read N- to C-terminus: UvrABC system protein C (647 aa).

The GIY-YIG domain occupies 16–95; that stretch reads VEPGVYRFRD…IKEFDPRFNV (80 aa). In terms of domain architecture, UVR spans 208-243; sequence DRFARELEQQMNAAAAELDFERAARLRDDLGALKRA.

This sequence belongs to the UvrC family. As to quaternary structure, interacts with UvrB in an incision complex.

The protein localises to the cytoplasm. In terms of biological role, the UvrABC repair system catalyzes the recognition and processing of DNA lesions. UvrC both incises the 5' and 3' sides of the lesion. The N-terminal half is responsible for the 3' incision and the C-terminal half is responsible for the 5' incision. This is UvrABC system protein C from Mycolicibacterium paratuberculosis (strain ATCC BAA-968 / K-10) (Mycobacterium paratuberculosis).